We begin with the raw amino-acid sequence, 307 residues long: 2-dehydropantoate 2-reductase (307 aa).

Residues 7–12, Asn-102, and Ala-128 contribute to the NADP(+) site; that span reads GSGAMG. Position 102 (Asn-102) interacts with substrate. Lys-184 (proton donor) is an active-site residue. Positions 188, 192, and 255 each coordinate substrate. Residue Glu-268 participates in NADP(+) binding.

The protein belongs to the ketopantoate reductase family.

It localises to the cytoplasm. The enzyme catalyses (R)-pantoate + NADP(+) = 2-dehydropantoate + NADPH + H(+). The protein operates within cofactor biosynthesis; (R)-pantothenate biosynthesis; (R)-pantoate from 3-methyl-2-oxobutanoate: step 2/2. In terms of biological role, catalyzes the NADPH-dependent reduction of ketopantoate into pantoic acid. The polypeptide is 2-dehydropantoate 2-reductase (apbA) (Streptococcus pyogenes serotype M1).